Consider the following 439-residue polypeptide: Adenylosuccinate synthetase (439 aa).

GTP is bound by residues glycine 25–lysine 31, glycine 53–threonine 55, and lysine 62. Aspartate 26 (proton acceptor) is an active-site residue. The Mg(2+) site is built by aspartate 26 and glycine 53. IMP-binding positions include aspartate 26 to lysine 29 and asparagine 51 to histidine 54. Residue histidine 54 is the Proton donor of the active site. IMP is bound by residues threonine 141, arginine 155, asparagine 232, and threonine 247. Position 307 (threonine 307) interacts with GTP. Threonine 307 to arginine 313 lines the substrate pocket. An IMP-binding site is contributed by arginine 311. GTP is bound by residues arginine 313, lysine 339 to aspartate 341, and glycine 425 to glycine 427.

It belongs to the adenylosuccinate synthetase family. Homodimer. Mg(2+) is required as a cofactor.

Its subcellular location is the cytoplasm. It carries out the reaction IMP + L-aspartate + GTP = N(6)-(1,2-dicarboxyethyl)-AMP + GDP + phosphate + 2 H(+). Its pathway is purine metabolism; AMP biosynthesis via de novo pathway; AMP from IMP: step 1/2. Its function is as follows. Plays an important role in the salvage pathway for purine nucleotide biosynthesis. Catalyzes the first commited step in the biosynthesis of AMP from IMP. The protein is Adenylosuccinate synthetase of Plasmodium chabaudi chabaudi.